The following is a 302-amino-acid chain: Dihydroorotate dehydrogenase B (NAD(+)), catalytic subunit (302 aa).

FMN contacts are provided by residues Ser-23 and 47-48 (KS). Substrate is bound by residues Lys-47, 71 to 75 (NAMGL), and Asn-125. Asn-125 is a binding site for FMN. The Nucleophile role is filled by Cys-128. The FMN site is built by Lys-163 and Ile-189. 190-191 (NT) contacts substrate. Residues Gly-215, 241-242 (GG), and 263-264 (GT) each bind FMN.

It belongs to the dihydroorotate dehydrogenase family. Type 1 subfamily. In terms of assembly, heterotetramer of 2 PyrK and 2 PyrD type B subunits. FMN serves as cofactor.

It is found in the cytoplasm. The enzyme catalyses (S)-dihydroorotate + NAD(+) = orotate + NADH + H(+). The protein operates within pyrimidine metabolism; UMP biosynthesis via de novo pathway; orotate from (S)-dihydroorotate (NAD(+) route): step 1/1. In terms of biological role, catalyzes the conversion of dihydroorotate to orotate with NAD(+) as electron acceptor. This chain is Dihydroorotate dehydrogenase B (NAD(+)), catalytic subunit (pyrD), found in Thermococcus kodakarensis (strain ATCC BAA-918 / JCM 12380 / KOD1) (Pyrococcus kodakaraensis (strain KOD1)).